A 428-amino-acid polypeptide reads, in one-letter code: Chaperone SurA (428 aa).

The N-terminal stretch at 1–20 (MKNWKTLLLGIAMIANTSFA) is a signal peptide. PpiC domains lie at 171-272 (STEL…KVND) and 282-382 (VTEV…ELLD).

The protein resides in the periplasm. It carries out the reaction [protein]-peptidylproline (omega=180) = [protein]-peptidylproline (omega=0). In terms of biological role, chaperone involved in the correct folding and assembly of outer membrane proteins. Recognizes specific patterns of aromatic residues and the orientation of their side chains, which are found more frequently in integral outer membrane proteins. May act in both early periplasmic and late outer membrane-associated steps of protein maturation. This Shigella dysenteriae serotype 1 (strain Sd197) protein is Chaperone SurA.